The primary structure comprises 75 residues: Protein Tlp homolog (75 aa).

The protein belongs to the Tlp family.

The protein is Protein Tlp homolog of Clostridium acetobutylicum (strain ATCC 824 / DSM 792 / JCM 1419 / IAM 19013 / LMG 5710 / NBRC 13948 / NRRL B-527 / VKM B-1787 / 2291 / W).